The following is a 479-amino-acid chain: MENKPSVLTDKYDVGRLLGQGTFAKVYYGRSILTNQSVAIKMIDKEKVMKVGLIEQIKREISVMRIARHPNVVELYEVMATKTRIYFVMEYCKGGELFNKVAKGKLRDDVAWKYFYQLINAVDFCHSREVYHRDIKPENLLLDDNENLKVSDFGLSALADCKRQDGLLHTTCGTPAYVAPEVINRKGYDGTKADIWSCGVVLFVLLAGYLPFHDSNLMEMYRKIGKADFKAPSWFAPEVRRLLCKMLDPNPETRITIARIRESSWFRKGLHMKQKKMEKRVKEINSVEAGTAGTNENGAGPSENGAGPSENGDRVTEENHTDEPTNLNAFDLIALSAGFDLAGLFGDDNKRESRFTSQKPASVIISKLEEVAQRLKLSIRKREAGLFKLERLKEGRKGILSMDAEIFQVTPNFHLVEVKKSNGDTLEYQKLVAEDLRPALSDIVWVWQGEKDELTSQQETEYQQQQQQEQQEQEEPLKF.

One can recognise a Protein kinase domain in the interval 12 to 266 (YDVGRLLGQG…IARIRESSWF (255 aa)). Residues 18 to 26 (LGQGTFAKV) and Lys41 contribute to the ATP site. The active-site Proton acceptor is Asp134. Residues 152-181 (DFGLSALADCKRQDGLLHTTCGTPAYVAPE) form an activation loop region. Residue Ser156 is modified to Phosphoserine. Thr170 carries the phosphothreonine modification. The disordered stretch occupies residues 286-323 (SVEAGTAGTNENGAGPSENGAGPSENGDRVTEENHTDE). Positions 288 to 300 (EAGTAGTNENGAG) are enriched in low complexity. Residues 311-323 (NGDRVTEENHTDE) are compositionally biased toward basic and acidic residues. The NAF domain maps to 322–346 (DEPTNLNAFDLIALSAGFDLAGLFG). The interval 350 to 379 (KRESRFTSQKPASVIISKLEEVAQRLKLSI) is PPI. Positions 456–479 (SQQETEYQQQQQQEQQEQEEPLKF) are disordered. The span at 457–470 (QQETEYQQQQQQEQ) shows a compositional bias: low complexity.

Belongs to the protein kinase superfamily. CAMK Ser/Thr protein kinase family. SNF1 subfamily. Interacts with CBL4/SOS3. Mn(2+) serves as cofactor. In terms of tissue distribution, mostly expressed in roots.

It carries out the reaction L-seryl-[protein] + ATP = O-phospho-L-seryl-[protein] + ADP + H(+). The catalysed reaction is L-threonyl-[protein] + ATP = O-phospho-L-threonyl-[protein] + ADP + H(+). CIPK serine-threonine protein kinases interact with CBL proteins. Binding of a CBL protein to the regulatory NAF domain of CIPK protein lead to the activation of the kinase in a calcium-dependent manner. The polypeptide is CBL-interacting serine/threonine-protein kinase 10 (CIPK10) (Arabidopsis thaliana (Mouse-ear cress)).